The sequence spans 202 residues: Shikimate kinase (202 aa).

Position 20-25 (20-25 (GSGKST)) interacts with ATP. Ser-24 lines the Mg(2+) pocket. Residues Asp-42, Arg-66, and Gly-88 each contribute to the substrate site. Arg-126 contributes to the ATP binding site. Arg-153 lines the substrate pocket.

This sequence belongs to the shikimate kinase family. Monomer. Requires Mg(2+) as cofactor.

Its subcellular location is the cytoplasm. It carries out the reaction shikimate + ATP = 3-phosphoshikimate + ADP + H(+). Its pathway is metabolic intermediate biosynthesis; chorismate biosynthesis; chorismate from D-erythrose 4-phosphate and phosphoenolpyruvate: step 5/7. Functionally, catalyzes the specific phosphorylation of the 3-hydroxyl group of shikimic acid using ATP as a cosubstrate. This chain is Shikimate kinase, found in Chlorobium luteolum (strain DSM 273 / BCRC 81028 / 2530) (Pelodictyon luteolum).